Here is a 535-residue protein sequence, read N- to C-terminus: MSLRPNAKTEVRRNRYKVAVDAEEGRRRREDNMVEIRKSKREESLQKKRREGLQANQLPQFAPSPVPASSTVEKKLESLPAMVGGVWSDDRSLQLEATTQFRKLLSIERSPPIEEVIDAGVVPRFVEFLTREDYPQLQFEAAWALTNIASGTSENTKVVIEHGAVPIFVQLLASQSDDVREQAVWALGNVAGDSPRCRDLVLGQGALIPLLSQLNEHAKLSMLRNATWTLSNFCRGKPQPPFDQVRPALPALERLIHSTDEEVLTDACWALSYLSDGTNDKIQSVIEAGVVPRLVELLQHQSPSVLIPALRSIGNIVTGDDLQTQCVISHGALLSLLSLLTHNHKKSIKKEACWTISNITAGNRDQIQAVCEAGLICPLVNLLQNAEFDIKKEAAWAISNATSGGSPDQIKYMVEQGVVKPLCDLLVCPDPRIITVCLEGLENILKVGEAEKVTGNTGDVNFYAQLIDDAEGLEKIENLQSHDNSEIYEKAVKILETYWLEEEDETLPPGDPSAQGFQFGGGNDAAVPPGGFNFQ.

Residues 1 to 58 (MSLRPNAKTEVRRNRYKVAVDAEEGRRRREDNMVEIRKSKREESLQKKRREGLQANQL) form the IBB domain. The segment covering 20 to 46 (VDAEEGRRRREDNMVEIRKSKREESLQ) has biased composition (basic and acidic residues). Positions 20–67 (VDAEEGRRRREDNMVEIRKSKREESLQKKRREGLQANQLPQFAPSPVP) are disordered. ARM repeat units follow at residues 67-106 (PASSTVEKKLESLPAMVGGVWSDDRSLQLEATTQFRKLLS), 110-150 (SPPI…NIAS), 153-192 (SENTKVVIEHGAVPIFVQLLASQSDDVREQAVWALGNVAG), 195-235 (PRCR…NFCR), 237-276 (KPQPPFDQVRPALPALERLIHSTDEEVLTDACWALSYLSD), 279-318 (NDKIQSVIEAGVVPRLVELLQHQSPSVLIPALRSIGNIVT), 321-361 (DLQT…NITA), 364-403 (RDQIQAVCEAGLICPLVNLLQNAEFDIKKEAAWAISNATS), 407-446 (PDQIKYMVEQGVVKPLCDLLVCPDPRIITVCLEGLENILK), and 461-500 (NFYAQLIDDAEGLEKIENLQSHDNSEIYEKAVKILETYWL).

This sequence belongs to the importin alpha family. In terms of assembly, forms a complex with the importin subunit beta-1 KPNB1. Interacts with A.tumefaciens VirD2 and VirE2. Binds to SWO1.

It localises to the nucleus envelope. Functionally, binds to conventional NLS motifs and mediates nuclear protein import across the nuclear envelope. Involved in the maintenance of cell wall integrity under salt stress via interaction with SWO1. Acts as a cellular receptor for the nuclear import of the virD2 protein of Agrobacterium, but is not essential for Agrobacterium-mediated root transformation. The protein is Importin subunit alpha-2 of Arabidopsis thaliana (Mouse-ear cress).